The chain runs to 476 residues: Protein transport protein Sec61 subunit alpha-like 1 (476 aa).

Over 2 to 33 (AIKFLEVIKPFCAVLPEIQKPERKIQFREKVL) the chain is Cytoplasmic. A helical transmembrane segment spans residues 34–53 (WTAITLFIFLVCCQIPLFGI). Residues 54-76 (MSSDSADPFYWMRVILASNRGTL) are Lumenal-facing. A helical transmembrane segment spans residues 77–96 (MELGISPIVTSGLIMQLLAG). Over 97 to 117 (AKIIEVGDTPKDRALFNGAQK) the chain is Cytoplasmic. The helical transmembrane segment at 118–138 (LFGMIITIGQAIVYVMTGMYG) threads the bilayer. Over 139-144 (DPSEMG) the chain is Lumenal. Residues 145–165 (AGICLLIIIQLFVAGLIVLLL) form a helical membrane-spanning segment. At 166 to 172 (DELLQKG) the chain is on the cytoplasmic side. The chain crosses the membrane as a helical span at residues 173–193 (YGLGSGISLFIATNICETIVW). Over 194 to 240 (KAFSPTTVNTGRGTEFEGAIIALFHLLATRTDKVRALREAFYRQNLP) the chain is Lumenal. The helical transmembrane segment at 241 to 261 (NLMNLIATVFVFAVVIYFQGF) threads the bilayer. Topologically, residues 262 to 288 (RVDLPIKSARYRGQYNTYPIKLFYTSN) are cytoplasmic. A helical transmembrane segment spans residues 289–309 (IPIILQSALVSNLYVISQMLS). Topologically, residues 310 to 354 (TRFSGNFLVNLLGTWSDTSSGGPARAYPVGGLCYYLSPPESFGSV) are lumenal. A helical membrane pass occupies residues 355-375 (LDDPVHAVIYIVFMLGSCAFF). Topologically, residues 376–420 (SKTWIEVSGSSAKDVAKQLKEQQMVMRGHRETSMVHELNRYIPTA) are cytoplasmic. A helical transmembrane segment spans residues 421 to 441 (AAFGGLCIGGLSVMADFLGAI). Residues 442–445 (GSGT) lie on the Lumenal side of the membrane. The chain crosses the membrane as a helical span at residues 446–462 (GILLAVTIIYQYFEIFV). Topologically, residues 463–476 (KEQSEVGSMGALLF) are cytoplasmic.

Belongs to the SecY/SEC61-alpha family. The SEC61 channel-forming translocon complex consists of channel-forming core components SEC61A1, SEC61B and SEC61G and different auxiliary components such as SEC62 and SEC63. The SEC61 channel associates with the multi-pass translocon (MPT) complex.

The protein localises to the endoplasmic reticulum membrane. In terms of biological role, component of SEC61 channel-forming translocon complex that mediates transport of signal peptide-containing precursor polypeptides across the endoplasmic reticulum (ER). Forms a ribosome receptor and a gated pore in the ER membrane, both functions required for cotranslational translocation of nascent polypeptides. May cooperate with auxiliary protein SEC62, SEC63 and HSPA5/BiP to enable post-translational transport of small presecretory proteins. The SEC61 channel is also involved in ER membrane insertion of transmembrane proteins: it mediates membrane insertion of the first few transmembrane segments of proteins, while insertion of subsequent transmembrane regions of multi-pass membrane proteins is mediated by the multi-pass translocon (MPT) complex. Plays a role in the pronephric kidney tubule development. This is Protein transport protein Sec61 subunit alpha-like 1 (sec61al1) from Danio rerio (Zebrafish).